Here is a 192-residue protein sequence, read N- to C-terminus: uncharacterized protein (192 aa).

This is an uncharacterized protein from Aquifex aeolicus (strain VF5).